The chain runs to 345 residues: Phosphoribosylformylglycinamidine cyclo-ligase (345 aa).

The protein belongs to the AIR synthase family.

It is found in the cytoplasm. It carries out the reaction 2-formamido-N(1)-(5-O-phospho-beta-D-ribosyl)acetamidine + ATP = 5-amino-1-(5-phospho-beta-D-ribosyl)imidazole + ADP + phosphate + H(+). It participates in purine metabolism; IMP biosynthesis via de novo pathway; 5-amino-1-(5-phospho-D-ribosyl)imidazole from N(2)-formyl-N(1)-(5-phospho-D-ribosyl)glycinamide: step 2/2. In Pasteurella multocida (strain Pm70), this protein is Phosphoribosylformylglycinamidine cyclo-ligase.